The primary structure comprises 116 residues: Non-specific lipid transfer protein GPI-anchored 17 (116 aa).

Residues 1-24 form the signal peptide; the sequence is MKIGVVLVLLTVFVVVMSSTSVSA. Cystine bridges form between C31-C74, C42-C58, and C59-C99. Residue N107 is the site of GPI-anchor amidated asparagine attachment. Residues 108 to 116 constitute a propeptide, removed in mature form; the sequence is GKNFKNTSL. The N-linked (GlcNAc...) asparagine glycan is linked to N113.

This sequence belongs to the plant LTP family. As to expression, expressed in seedlings, preferentially in roots.

It is found in the cell membrane. Functionally, probable lipid transfer protein. This is Non-specific lipid transfer protein GPI-anchored 17 from Arabidopsis thaliana (Mouse-ear cress).